The primary structure comprises 362 residues: Chalcone synthase A (362 aa).

C168 is an active-site residue.

This sequence belongs to the thiolase-like superfamily. Chalcone/stilbene synthases family.

It carries out the reaction (E)-4-coumaroyl-CoA + 3 malonyl-CoA + 3 H(+) = 2',4,4',6'-tetrahydroxychalcone + 3 CO2 + 4 CoA. It participates in secondary metabolite biosynthesis; flavonoid biosynthesis. The primary product of this enzyme is 4,2',4',6'-tetrahydroxychalcone (also termed naringenin-chalcone or chalcone) which can under specific conditions spontaneously isomerize into naringenin. In Ipomoea triloba (Trilobed morning glory), this protein is Chalcone synthase A (CHSA).